The primary structure comprises 572 residues: Frizzled-7 (572 aa).

The N-terminal stretch at 1 to 32 (MRGPGTAASHSPLGLCALVLALLGALPTDTRA) is a signal peptide. The Extracellular portion of the chain corresponds to 33-254 (QPYHGEKGIS…EEERRFARLW (222 aa)). Positions 44–163 (PDHGFCQPIS…HGAGEICVGQ (120 aa)) constitute an FZ domain. Disulfide bonds link cysteine 49/cysteine 110, cysteine 57/cysteine 103, cysteine 94/cysteine 131, cysteine 120/cysteine 160, and cysteine 124/cysteine 148. An N-linked (GlcNAc...) asparagine glycan is attached at asparagine 63. An N-linked (GlcNAc...) asparagine glycan is attached at asparagine 164. A helical transmembrane segment spans residues 255–275 (VGVWSVLCCASTLFTVLTYLV). The Cytoplasmic portion of the chain corresponds to 276–286 (DMRRFSYPERP). The helical transmembrane segment at 287–307 (IIFLSGCYFMVAVAHVAGFLL) threads the bilayer. Topologically, residues 308-334 (EDRAVCVERFSDDGYRTVAQGTKKEGC) are extracellular. A helical transmembrane segment spans residues 335-355 (TILFMVLYFFGMASSIWWVIL). Residues 356 to 377 (SLTWFLAAGMKWGHEAIEANSQ) are Cytoplasmic-facing. The helical transmembrane segment at 378-398 (YFHLAAWAVPAVKTITILAMG) threads the bilayer. Topologically, residues 399–421 (QVDGDLLSGVCYVGLSSVDALRG) are extracellular. The helical transmembrane segment at 422-442 (FVLAPLFVYLFIGTSFLLAGF) threads the bilayer. At 443 to 468 (VSLFRIRTIMKHDGTKTEKLEKLMVR) the chain is on the cytoplasmic side. The helical transmembrane segment at 469-489 (IGVFSVLYTVPATIVLACYFY) threads the bilayer. The Extracellular segment spans residues 490–526 (EQAFREHWERTWLLQTCKSYAVPCPPGHFSPMSPDFT). Residues 527–547 (VFMIKYLMTMIVGITTGFWIW) form a helical membrane-spanning segment. The Cytoplasmic segment spans residues 548–572 (SGKTLQSWRRFYHRLSHSSKGETAV). The short motif at 550–555 (KTLQSW) is the Lys-Thr-X-X-X-Trp motif, mediates interaction with the PDZ domain of Dvl family members element. A PDZ-binding motif is present at residues 570–572 (TAV).

Belongs to the G-protein coupled receptor Fz/Smo family. In terms of assembly, interacts with MAGI3. Interacts with DVL1. Interacts with CCDC88C/DAPLE; the interaction displaces DVL1 from FZD7, leading to inhibition of canonical Wnt signaling and triggering of non-canonical Wnt responses. Interacts with MYOC. Binds to SDCBP; this interaction is increased by inositol trisphosphate (IP3). Interacts with glypican GPC3. In terms of processing, ubiquitinated by ZNRF3, leading to its degradation by the proteasome.

It is found in the cell membrane. The protein resides in the endosome membrane. Receptor for Wnt proteins. Most frizzled receptors are coupled to the beta-catenin canonical signaling pathway, which leads to the activation of disheveled proteins, inhibition of GSK-3 kinase, nuclear accumulation of beta-catenin and activation of Wnt target genes. A second signaling pathway involving PKC and calcium fluxes has been seen for some family members, but it is not yet clear if it represents a distinct pathway or if it can be integrated in the canonical pathway, as PKC seems to be required for Wnt-mediated inactivation of GSK-3 kinase. Both pathways seem to involve interactions with G-proteins. Activation by WNT8 induces expression of beta-catenin target genes. Following ligand activation, binds to CCDC88C/DAPLE which displaces DVL1 from FZD7 and leads to inhibition of canonical Wnt signaling, activation of G-proteins by CCDC88C and triggering of non-canonical Wnt responses. May be involved in transduction and intercellular transmission of polarity information during tissue morphogenesis and/or in differentiated tissues. The polypeptide is Frizzled-7 (Fzd7) (Mus musculus (Mouse)).